The chain runs to 310 residues: MPPRQLRIGTRASQLALWQANWVKSELEKRYPAMEVTLTKIKTMGDRILDVPLAQVGGKGLFVKEIEEAMLRGEIDIAVHSMKDVPTEFPEGLGLYCITEREDPRDAVVSRAARFSHLPPGARVGTSALRRQAQLLHARPDLEMVTIRGNVETRIRKLDEENLDAVILAAAGLKRLGLTQRVAEYLDVEFSIPAIGQGALGIECRLSDPVVTEAIAFFNHPDTSHAVRAERALLRRCQGGCQVPIAAHGTIRGGELRLVGLIAAVDGREFVRDEISGPVDQCEHLGEELADRLLSRGGRAILEEVYQREI.

Cysteine 241 is modified (S-(dipyrrolylmethanemethyl)cysteine).

Belongs to the HMBS family. Monomer. Dipyrromethane serves as cofactor.

The enzyme catalyses 4 porphobilinogen + H2O = hydroxymethylbilane + 4 NH4(+). Its pathway is porphyrin-containing compound metabolism; protoporphyrin-IX biosynthesis; coproporphyrinogen-III from 5-aminolevulinate: step 2/4. Its function is as follows. Tetrapolymerization of the monopyrrole PBG into the hydroxymethylbilane pre-uroporphyrinogen in several discrete steps. The chain is Porphobilinogen deaminase from Pelobacter propionicus (strain DSM 2379 / NBRC 103807 / OttBd1).